The following is a 684-amino-acid chain: DNA-directed RNA polymerase subunit beta' (684 aa).

Residues C69, C71, C87, and C90 each coordinate Zn(2+). Residues D489, D491, and D493 each contribute to the Mg(2+) site.

Belongs to the RNA polymerase beta' chain family. RpoC1 subfamily. As to quaternary structure, in plastids the minimal PEP RNA polymerase catalytic core is composed of four subunits: alpha, beta, beta', and beta''. When a (nuclear-encoded) sigma factor is associated with the core the holoenzyme is formed, which can initiate transcription. Mg(2+) is required as a cofactor. The cofactor is Zn(2+).

It is found in the plastid. The protein localises to the chloroplast. The enzyme catalyses RNA(n) + a ribonucleoside 5'-triphosphate = RNA(n+1) + diphosphate. Its function is as follows. DNA-dependent RNA polymerase catalyzes the transcription of DNA into RNA using the four ribonucleoside triphosphates as substrates. The sequence is that of DNA-directed RNA polymerase subunit beta' from Marchantia polymorpha (Common liverwort).